Consider the following 399-residue polypeptide: Acetate kinase (399 aa).

Mg(2+) is bound at residue Asn-10. Lys-17 is a binding site for ATP. Arg-91 is a binding site for substrate. The active-site Proton donor/acceptor is Asp-148. Residues 208–212 (HLGNG), 283–285 (DCR), and 331–335 (GIGEN) each bind ATP. Mg(2+) is bound at residue Glu-385.

The protein belongs to the acetokinase family. In terms of assembly, homodimer. Mg(2+) serves as cofactor. Mn(2+) is required as a cofactor.

The protein localises to the cytoplasm. The catalysed reaction is acetate + ATP = acetyl phosphate + ADP. The protein operates within metabolic intermediate biosynthesis; acetyl-CoA biosynthesis; acetyl-CoA from acetate: step 1/2. Its function is as follows. Catalyzes the formation of acetyl phosphate from acetate and ATP. Can also catalyze the reverse reaction. The sequence is that of Acetate kinase from Shewanella baltica (strain OS223).